We begin with the raw amino-acid sequence, 231 residues long: Ribosyldihydronicotinamide dehydrogenase [quinone] (231 aa).

Residues His12 and 18–21 (FNGS) each bind FAD. Ser80 carries the phosphoserine modification. 104 to 107 (LYWF) serves as a coordination point for FAD. 127-129 (FDI) serves as a coordination point for substrate. FAD contacts are provided by residues 148 to 151 (TTGG) and Tyr156. Zn(2+) is bound by residues His174 and His178. Residue Glu194 coordinates FAD. The residue at position 197 (Ser197) is a Phosphoserine. Arg201 is an FAD binding site. Cys223 serves as a coordination point for Zn(2+).

It belongs to the NAD(P)H dehydrogenase (quinone) family. In terms of assembly, homodimer. Zn(2+) is required as a cofactor. FAD serves as cofactor.

It is found in the cytoplasm. It carries out the reaction 1-(beta-D-ribofuranosyl)-1,4-dihydronicotinamide + a quinone + H(+) = beta-nicotinamide D-riboside + a quinol. Inhibited by melatonin, resveratrol and 5-hydroxytryptamine. Its function is as follows. The enzyme apparently serves as a quinone reductase in connection with conjugation reactions of hydroquinones involved in detoxification pathways as well as in biosynthetic processes such as the vitamin K-dependent gamma-carboxylation of glutamate residues in prothrombin synthesis. In Homo sapiens (Human), this protein is Ribosyldihydronicotinamide dehydrogenase [quinone] (NQO2).